A 130-amino-acid polypeptide reads, in one-letter code: Small ribosomal subunit protein uS8 (130 aa).

Belongs to the universal ribosomal protein uS8 family. As to quaternary structure, part of the 30S ribosomal subunit.

Functionally, one of the primary rRNA binding proteins, it binds directly to 16S rRNA central domain where it helps coordinate assembly of the platform of the 30S subunit. The sequence is that of Small ribosomal subunit protein uS8 from Haloarcula marismortui (strain ATCC 43049 / DSM 3752 / JCM 8966 / VKM B-1809) (Halobacterium marismortui).